A 510-amino-acid chain; its full sequence is ATP synthase subunit alpha (510 aa).

ATP is bound at residue 169-176; that stretch reads GDRQTGKT.

It belongs to the ATPase alpha/beta chains family. As to quaternary structure, F-type ATPases have 2 components, CF(1) - the catalytic core - and CF(0) - the membrane proton channel. CF(1) has five subunits: alpha(3), beta(3), gamma(1), delta(1), epsilon(1). CF(0) has three main subunits: a(1), b(2) and c(9-12). The alpha and beta chains form an alternating ring which encloses part of the gamma chain. CF(1) is attached to CF(0) by a central stalk formed by the gamma and epsilon chains, while a peripheral stalk is formed by the delta and b chains.

Its subcellular location is the cell inner membrane. It carries out the reaction ATP + H2O + 4 H(+)(in) = ADP + phosphate + 5 H(+)(out). Its function is as follows. Produces ATP from ADP in the presence of a proton gradient across the membrane. The alpha chain is a regulatory subunit. The sequence is that of ATP synthase subunit alpha from Methylobacterium radiotolerans (strain ATCC 27329 / DSM 1819 / JCM 2831 / NBRC 15690 / NCIMB 10815 / 0-1).